The primary structure comprises 288 residues: MPHVNLLVVLLILPGVFSNCLFLALYDAVSFLRRALQASLTHSAKGDAQHPRMLTAQGMLSVWRSYVLDAHKKVRLGGKAPNSSVVALGGHSSSSPSFSCAASSSSSHETPTPRTTAEAAATVTTSTTTTSTTSSTAACRLLDFARAHRPLVVNFGSASUPPFVEQLGEFCDLVRDFAGVADFLVVYIEEAHPSDAWPAPGGLEVPRHLALGDRCVAASQLRGLMPPLGRCPVVADAMDNNANIDYGVSYERLYVIQDGRIRYLGGKGPFFYRVREVKSFLESVKASR.

Topologically, residues 1 to 5 are lumenal; sequence MPHVN. A helical; Signal-anchor for type III membrane protein membrane pass occupies residues 6 to 26; the sequence is LLVVLLILPGVFSNCLFLALY. Over 27–288 the chain is Cytoplasmic; the sequence is DAVSFLRRAL…SFLESVKASR (262 aa). The segment at 99 to 130 is disordered; it reads SCAASSSSSHETPTPRTTAEAAATVTTSTTTT. The active site involves Sec160. Residue Sec160 is a non-standard amino acid, selenocysteine.

It belongs to the iodothyronine deiodinase family. As to quaternary structure, predominantly monomer. Can form homodimers but homodimerization is not essential for enzyme activity. As to expression, expressed in intestine, liver, kidney and brain of immediately premetamorphic larvae, of larvae in all stages of metamorphosis and of parasitic feeding juveniles. In immediately premetamorphic larvae, levels are significantly higher in intestine and liver than in kidney and brain.

The protein resides in the endoplasmic reticulum membrane. The enzyme catalyses 3,3',5-triiodo-L-thyronine + iodide + A + H(+) = L-thyroxine + AH2. The catalysed reaction is 3,3'-diiodo-L-thyronine + iodide + A + H(+) = 3,3',5'-triiodo-L-thyronine + AH2. It carries out the reaction 3'-iodo-L-thyronine + iodide + A + H(+) = 3',5'-diiodo-L-thyronine + AH2. It catalyses the reaction 3,3'-diiodothyronamine + iodide + A + H(+) = 3,3',5'-triiodothyronamine + AH2. The enzyme catalyses 3'-iodothyronamine + iodide + A + H(+) = 3',5'-diiodothyronamine + AH2. Functionally, plays a crucial role in the metabolism of thyroid hormones (TH) and has specific roles in TH activation and inactivation by deiodination. Catalyzes the deiodination of L-thyroxine (T4) to 3,5,3'-triiodothyronine (T3), 3,3',5'-triiodothyronine (rT3) to 3,3'-diiodothyronine (3,3'-T2) and 3',5'-diiodothyronine (3',5'-T2) to 3'-monoiodothyronine (3'-T1) via outer-ring deiodination (ORD). Catalyzes the phenolic ring deiodinations of 3,3',5'-triiodothyronamine and 3',5'- diiodothyronamine. The polypeptide is Type II iodothyronine deiodinase (Petromyzon marinus (Sea lamprey)).